The following is a 367-amino-acid chain: Probable glutamine synthetase (367 aa).

The GS beta-grasp domain occupies 30–110 (IQATYVWIDG…VMCDTLDHQM (81 aa)). The GS catalytic domain maps to 117–367 (HRQACAEIMH…TAMIAQSILF (251 aa)).

Belongs to the glutamine synthetase family. Homooctamer.

It is found in the cytoplasm. The enzyme catalyses L-glutamate + NH4(+) + ATP = L-glutamine + ADP + phosphate + H(+). This Caenorhabditis elegans protein is Probable glutamine synthetase (gln-2).